Reading from the N-terminus, the 581-residue chain is Threonine--tRNA ligase (581 aa).

Residues 185–478 form a catalytic region; sequence DHRKLGKELD…LIEHYGGAFP (294 aa). 3 residues coordinate Zn(2+): Cys-278, His-329, and His-455.

Belongs to the class-II aminoacyl-tRNA synthetase family. As to quaternary structure, homodimer. It depends on Zn(2+) as a cofactor.

It localises to the cytoplasm. It catalyses the reaction tRNA(Thr) + L-threonine + ATP = L-threonyl-tRNA(Thr) + AMP + diphosphate + H(+). Its function is as follows. Catalyzes the attachment of threonine to tRNA(Thr) in a two-step reaction: L-threonine is first activated by ATP to form Thr-AMP and then transferred to the acceptor end of tRNA(Thr). Also edits incorrectly charged L-seryl-tRNA(Thr). The chain is Threonine--tRNA ligase from Borreliella afzelii (strain PKo) (Borrelia afzelii).